A 223-amino-acid chain; its full sequence is Proteasome subunit beta (223 aa).

A propeptide spans 1 to 6 (MDTMKG) (removed in mature form; by autocatalysis). Catalysis depends on threonine 7, which acts as the Nucleophile.

The protein belongs to the peptidase T1B family. The 20S proteasome core is composed of 14 alpha and 14 beta subunits that assemble into four stacked heptameric rings, resulting in a barrel-shaped structure. The two inner rings, each composed of seven catalytic beta subunits, are sandwiched by two outer rings, each composed of seven alpha subunits. The catalytic chamber with the active sites is on the inside of the barrel. Has a gated structure, the ends of the cylinder being occluded by the N-termini of the alpha-subunits. Is capped at one or both ends by the proteasome regulatory ATPase, PAN.

The protein localises to the cytoplasm. It catalyses the reaction Cleavage of peptide bonds with very broad specificity.. Its activity is regulated as follows. The formation of the proteasomal ATPase PAN-20S proteasome complex, via the docking of the C-termini of PAN into the intersubunit pockets in the alpha-rings, triggers opening of the gate for substrate entry. Interconversion between the open-gate and close-gate conformations leads to a dynamic regulation of the 20S proteasome proteolysis activity. In terms of biological role, component of the proteasome core, a large protease complex with broad specificity involved in protein degradation. The protein is Proteasome subunit beta of Methanocaldococcus vulcanius (strain ATCC 700851 / DSM 12094 / M7) (Methanococcus vulcanius).